The following is a 528-amino-acid chain: Bifunctional dihydrofolate reductase-thymidylate synthase (528 aa).

Residues 1 to 20 (MASELLANPTNGSGITRPDP) form a disordered region. One can recognise a DHFR domain in the interval 23 to 200 (TYQVVVAATQ…IRYCFTTYVR (178 aa)). A substrate-binding site is contributed by Val27. NADP(+) contacts are provided by residues Ala29 and 35 to 41 (GIGKDGK). Asp49 serves as a coordination point for substrate. Residues 73 to 75 (RKT) and 94 to 97 (LTRS) contribute to the NADP(+) site. The substrate site is built by Ile136, Tyr142, and Thr157. 137-144 (GGGQIYRE) is an NADP(+) binding site. A thymidylate synthase region spans residues 202-528 (RNSVAELTSQ…HQKIEMKMAV (327 aa)). Arg264 contacts dUMP. Cys409 is an active-site residue. Residues His410, 428 to 432 (QRSAD), Asn440, and 470 to 472 (HVY) each bind dUMP.

It in the N-terminal section; belongs to the dihydrofolate reductase family. In the C-terminal section; belongs to the thymidylate synthase family.

The catalysed reaction is (6S)-5,6,7,8-tetrahydrofolate + NADP(+) = 7,8-dihydrofolate + NADPH + H(+). It catalyses the reaction dUMP + (6R)-5,10-methylene-5,6,7,8-tetrahydrofolate = 7,8-dihydrofolate + dTMP. The protein operates within cofactor biosynthesis; tetrahydrofolate biosynthesis; 5,6,7,8-tetrahydrofolate from 7,8-dihydrofolate: step 1/1. Bifunctional enzyme. Involved in de novo dTMP biosynthesis. Key enzyme in folate metabolism. Can play two different roles depending on the source of dihydrofolate: de novo synthesis of tetrahydrofolate or recycling of the dihydrofolate released as one of the end products of the TS catalyzed reaction. Catalyzes an essential reaction for de novo glycine and purine synthesis, DNA precursor synthesis, and for the conversion of dUMP to dTMP. The sequence is that of Bifunctional dihydrofolate reductase-thymidylate synthase from Daucus carota (Wild carrot).